A 215-amino-acid chain; its full sequence is HTH-type transcriptional repressor FabR (215 aa).

Residues 10-70 enclose the HTH tetR-type domain; the sequence is KTRRSLVEAA…TMVDESGLML (61 aa). The H-T-H motif DNA-binding region spans 33 to 52; the sequence is SLREVAREAGIAPTSFYRHF.

Homodimer.

It localises to the cytoplasm. Its function is as follows. Represses the transcription of fabB, involved in unsaturated fatty acid (UFA) biosynthesis. By controlling UFA production, FabR directly influences the physical properties of the membrane bilayer. This Escherichia coli O9:H4 (strain HS) protein is HTH-type transcriptional repressor FabR.